Reading from the N-terminus, the 170-residue chain is dCTP pyrophosphatase 1 (170 aa).

Residues 1-25 form a disordered region; it reads MSTAGDGERGTVGQEDSAAARPFRF. At S2 the chain carries N-acetylserine. S2 is modified (phosphoserine). Substrate-binding positions include H38 and 47–51; that span reads WEQFH. The Mg(2+) site is built by E63 and E66. W73 is a substrate binding site. Residues E95 and D98 each contribute to the Mg(2+) site. Y102 is a substrate binding site. Residues 150 to 170 are disordered; sequence SENQAVGAGDPASELRDQAST.

In terms of assembly, homotetramer. Mg(2+) is required as a cofactor. In terms of tissue distribution, ubiquitous. Highly expressed in heart, liver, skeletal muscle, cerebellum, brain, and salivary gland.

It is found in the cytoplasm. The protein localises to the cytosol. The enzyme catalyses dCTP + H2O = dCMP + diphosphate + H(+). Inhibited by divalent calcium or cadmium ions. Functionally, hydrolyzes deoxynucleoside triphosphates (dNTPs) to the corresponding nucleoside monophosphates. Has a strong preference for dCTP and its analogs including 5-iodo-dCTP and 5-methyl-dCTP for which it may even have a higher efficiency. May protect DNA or RNA against the incorporation of these genotoxic nucleotide analogs through their catabolism. The sequence is that of dCTP pyrophosphatase 1 from Mus musculus (Mouse).